Reading from the N-terminus, the 114-residue chain is Lymphotactin (114 aa).

Residues 1-21 (MRLLLLTFLGVCCFAAWVVEG) form the signal peptide. A disulfide bridge links C32 with C69. The disordered stretch occupies residues 87-114 (RASASKSKAETIPTQAQRSASTAVTLTG). Residues 98–114 (IPTQAQRSASTAVTLTG) show a composition bias toward polar residues.

This sequence belongs to the intercrine gamma family.

The protein resides in the secreted. Its function is as follows. Chemotactic activity for lymphocytes but not for monocytes or neutrophils. In thymus, mediates medullary accumulation of thymic dendritic cells and contributes to regulatoy T cell development, playing a role in self-tolerance establishment. This Rattus norvegicus (Rat) protein is Lymphotactin (Xcl1).